The following is a 418-amino-acid chain: Cell division protein FtsA (418 aa).

This sequence belongs to the FtsA/MreB family. Self-interacts. Interacts with FtsZ.

The protein resides in the cell inner membrane. Functionally, cell division protein that is involved in the assembly of the Z ring. May serve as a membrane anchor for the Z ring. The polypeptide is Cell division protein FtsA (Buchnera aphidicola subsp. Schizaphis graminum (strain Sg)).